The chain runs to 707 residues: Protein kinase C theta type (707 aa).

Residues 1-107 (MSPFLRIGLS…KNNGRTEIWL (107 aa)) form the C2 domain. A Phosphotyrosine; by LCK modification is found at tyrosine 90. The Phorbol-ester/DAG-type 1 zinc-finger motif lies at 159–209 (CHEFTATFFPQPTFCSVCHEFVWGLNKQGYQCRQCNAAIHKKCIDKVIAKC). Threonine 219 bears the Phosphothreonine; by autocatalysis mark. Residues 231–281 (PHRFKVYNYKSPTFCEHCGTLLWGLARQGLKCDACGMNVHHRCQTKVANLC) form a Phorbol-ester/DAG-type 2 zinc finger. Residues 327–365 (ETRPPCVPTPGKREPQGISWDSPLDGSNKSAGPPEPEVS) form a disordered region. The residue at position 348 (serine 348) is a Phosphoserine. The Protein kinase domain occupies 380–634 (FILHKMLGKG…RGDIRQHPLF (255 aa)). Residues 386-394 (LGKGSFGKV) and lysine 409 each bind ATP. Catalysis depends on aspartate 504, which acts as the Proton acceptor. Phosphothreonine; by PDPK1 is present on threonine 538. In terms of domain architecture, AGC-kinase C-terminal spans 635–706 (REINWEELER…INPGMETLIC (72 aa)). Serine 676 bears the Phosphoserine; by autocatalysis mark. Position 685 is a phosphoserine (serine 685). Phosphoserine; by autocatalysis is present on serine 695.

The protein belongs to the protein kinase superfamily. AGC Ser/Thr protein kinase family. PKC subfamily. Part of a membrane raft complex composed at least of BCL10, CARD11, MALT1 and IKBKB. Interacts with GLRX3 (via N-terminus). Interacts with ECT2. Interacts with CCDC88A/GIV; the interaction leads to phosphorylation of CCDC88A and inhibition of its guanine nucleotide exchange factor activity. Interacts with CD28. Mg(2+) is required as a cofactor. In terms of processing, autophosphorylation at Thr-219 is required for targeting to the TCR and cellular function of PRKCQ upon antigen receptor ligation. Following TCR stimulation, phosphorylated at Tyr-90 and Ser-685. T-lymphocytes and skeletal muscle.

Its subcellular location is the cytoplasm. The protein localises to the cell membrane. The enzyme catalyses L-seryl-[protein] + ATP = O-phospho-L-seryl-[protein] + ADP + H(+). It catalyses the reaction L-threonyl-[protein] + ATP = O-phospho-L-threonyl-[protein] + ADP + H(+). With respect to regulation, novel PKCs (PRKCD, PRKCE, PRKCH and PRKCQ) are calcium-insensitive, but activated by diacylglycerol (DAG) and phosphatidylserine. Three specific sites; Thr-538 (activation loop of the kinase domain), Ser-676 (turn motif) and Ser-695 (hydrophobic region), need to be phosphorylated for its full activation. In terms of biological role, calcium-independent, phospholipid- and diacylglycerol (DAG)-dependent serine/threonine-protein kinase that mediates non-redundant functions in T-cell receptor (TCR) signaling, including T-cells activation, proliferation, differentiation and survival, by mediating activation of multiple transcription factors such as NF-kappa-B, JUN, NFATC1 and NFATC2. In TCR-CD3/CD28-co-stimulated T-cells, is required for the activation of NF-kappa-B and JUN, which in turn are essential for IL2 production, and participates in the calcium-dependent NFATC1 and NFATC2 transactivation. Mediates the activation of the canonical NF-kappa-B pathway (NFKB1) by direct phosphorylation of CARD11 on several serine residues, inducing CARD11 association with lipid rafts and recruitment of the BCL10-MALT1 complex, which then activates IKK complex, resulting in nuclear translocation and activation of NFKB1. May also play an indirect role in activation of the non-canonical NF-kappa-B (NFKB2) pathway. In the signaling pathway leading to JUN activation, acts by phosphorylating the mediator STK39/SPAK and may not act through MAP kinases signaling. Plays a critical role in TCR/CD28-induced NFATC1 and NFATC2 transactivation by participating in the regulation of reduced inositol 1,4,5-trisphosphate generation and intracellular calcium mobilization. After costimulation of T-cells through CD28 can phosphorylate CBLB and is required for the ubiquitination and subsequent degradation of CBLB, which is a prerequisite for the activation of TCR. During T-cells differentiation, plays an important role in the development of T-helper 2 (Th2) cells following immune and inflammatory responses, and, in the development of inflammatory autoimmune diseases, is necessary for the activation of IL17-producing Th17 cells. May play a minor role in Th1 response. Upon TCR stimulation, mediates T-cell protective survival signal by phosphorylating BAD, thus protecting T-cells from BAD-induced apoptosis, and by up-regulating BCL-X(L)/BCL2L1 levels through NF-kappa-B and JUN pathways. In platelets, regulates signal transduction downstream of the ITGA2B, CD36/GP4, F2R/PAR1 and F2RL3/PAR4 receptors, playing a positive role in 'outside-in' signaling and granule secretion signal transduction. May relay signals from the activated ITGA2B receptor by regulating the uncoupling of WASP and WIPF1, thereby permitting the regulation of actin filament nucleation and branching activity of the Arp2/3 complex. May mediate inhibitory effects of free fatty acids on insulin signaling by phosphorylating IRS1, which in turn blocks IRS1 tyrosine phosphorylation and downstream activation of the PI3K/AKT pathway. Phosphorylates MSN (moesin) in the presence of phosphatidylglycerol or phosphatidylinositol. Phosphorylates PDPK1 at 'Ser-504' and 'Ser-532' and negatively regulates its ability to phosphorylate PKB/AKT1. Phosphorylates CCDC88A/GIV and inhibits its guanine nucleotide exchange factor activity. Phosphorylates and activates LRRK1, which phosphorylates RAB proteins involved in intracellular trafficking. In Mus musculus (Mouse), this protein is Protein kinase C theta type (Prkcq).